A 311-amino-acid polypeptide reads, in one-letter code: Syntaxin-111 (311 aa).

At 1–284 (MNDLMTKSFM…AREHQRSSRK (284 aa)) the chain is on the cytoplasmic side. In terms of domain architecture, t-SNARE coiled-coil homology spans 213-275 (VHEIQDRHDA…QGGNKELRKA (63 aa)). Residues 285-305 (WLCIGIIILLLLVLLVIVPIA) form a helical; Anchor for type IV membrane protein membrane-spanning segment. Topologically, residues 306–311 (TSFKRS) are vesicular.

This sequence belongs to the syntaxin family. As to expression, expressed in roots and panicles.

Its subcellular location is the cell membrane. It localises to the cytoplasm. Functionally, vesicle trafficking protein that functions in the secretory pathway. The sequence is that of Syntaxin-111 from Oryza sativa subsp. japonica (Rice).